The primary structure comprises 317 residues: Lipopolysaccharide heptosyltransferase 1 (317 aa).

ADP-L-glycero-beta-D-manno-heptose-binding residues include Thr187, Thr188, Lys192, Glu222, Met242, Asp261, Thr262, Gly263, and His266.

Belongs to the glycosyltransferase 9 family.

Its subcellular location is the cell inner membrane. It carries out the reaction an alpha-Kdo-(2-&gt;4)-alpha-Kdo-(2-&gt;6)-lipid A + ADP-L-glycero-beta-D-manno-heptose = an L-alpha-D-Hep-(1-&gt;5)-[alpha-Kdo-(2-&gt;4)]-alpha-Kdo-(2-&gt;6)-lipid A + ADP + H(+). Its pathway is bacterial outer membrane biogenesis; LPS core biosynthesis. Glycosyltransferase involved in the biosynthesis of the core oligosaccharide region of lipopolysaccharide (LPS). Catalyzes the addition of the first heptose unit to one 3-deoxy-D-manno-octulosonic acid (Kdo) residue of the Kdo2-lipid A module. This chain is Lipopolysaccharide heptosyltransferase 1, found in Salmonella typhimurium (strain LT2 / SGSC1412 / ATCC 700720).